Consider the following 77-residue polypeptide: Acyl carrier protein (77 aa).

The 74-residue stretch at 4–77 folds into the Carrier domain; that stretch reads SETFEKVKKI…TVQAAVDXIN (74 aa). S40 is subject to O-(pantetheine 4'-phosphoryl)serine.

It belongs to the acyl carrier protein (ACP) family. 4'-phosphopantetheine is transferred from CoA to a specific serine of apo-ACP by AcpS. This modification is essential for activity because fatty acids are bound in thioester linkage to the sulfhydryl of the prosthetic group.

The protein localises to the cytoplasm. Its pathway is lipid metabolism; fatty acid biosynthesis. Carrier of the growing fatty acid chain in fatty acid biosynthesis. The protein is Acyl carrier protein of Anabaena variabilis.